Here is an 84-residue protein sequence, read N- to C-terminus: UPF0248 protein PF1300 (84 aa).

It belongs to the UPF0248 family.

This Pyrococcus furiosus (strain ATCC 43587 / DSM 3638 / JCM 8422 / Vc1) protein is UPF0248 protein PF1300.